The chain runs to 325 residues: Tetraacyldisaccharide 4'-kinase (325 aa).

55–62 (TAGGNGKT) provides a ligand contact to ATP.

This sequence belongs to the LpxK family.

It catalyses the reaction a lipid A disaccharide + ATP = a lipid IVA + ADP + H(+). The protein operates within glycolipid biosynthesis; lipid IV(A) biosynthesis; lipid IV(A) from (3R)-3-hydroxytetradecanoyl-[acyl-carrier-protein] and UDP-N-acetyl-alpha-D-glucosamine: step 6/6. Its function is as follows. Transfers the gamma-phosphate of ATP to the 4'-position of a tetraacyldisaccharide 1-phosphate intermediate (termed DS-1-P) to form tetraacyldisaccharide 1,4'-bis-phosphate (lipid IVA). This Salmonella heidelberg (strain SL476) protein is Tetraacyldisaccharide 4'-kinase.